Here is a 245-residue protein sequence, read N- to C-terminus: MIKLVLIRHGQSLWNLENRFTGWTDVDLSENGLSEAREAGAILKKNGYTFDMAYTSVLKRAIRTLWIVLHEMDLTWVPIHKSWKLNERHYGALQGLNKDETAQKYGEEQVHIWRRSVDVRPPALTEDDPRYEATDPRYKTLKKGEFPLTECLEDTEKRVLAYWHSEIAPTLKSGNKVIISSHGNTIRSLVKYLDNLSSDGVVSLNIPTSIPLVYELDENLRPIRHYYLSMDGEVPEGEIPKHISF.

Substrate is bound by residues 8–15 (RHGQSLWN), 21–22 (TG), arginine 60, 87–90 (ERHY), lysine 98, 114–115 (RR), and 183–184 (GN). The active-site Tele-phosphohistidine intermediate is histidine 9. Glutamate 87 functions as the Proton donor/acceptor in the catalytic mechanism.

The protein belongs to the phosphoglycerate mutase family. BPG-dependent PGAM subfamily.

The enzyme catalyses (2R)-2-phosphoglycerate = (2R)-3-phosphoglycerate. Its pathway is carbohydrate degradation; glycolysis; pyruvate from D-glyceraldehyde 3-phosphate: step 3/5. In terms of biological role, catalyzes the interconversion of 2-phosphoglycerate and 3-phosphoglycerate. This is 2,3-bisphosphoglycerate-dependent phosphoglycerate mutase from Bacillus cereus (strain B4264).